The following is a 444-amino-acid chain: N-succinylarginine dihydrolase (444 aa).

Substrate is bound by residues 19–28 (AGLSFGNVAS), Asn110, and 137–138 (HR). Glu174 is a catalytic residue. Arg214 serves as a coordination point for substrate. Residue His250 is part of the active site. Substrate contacts are provided by Asp252 and Asn362. Cys368 acts as the Nucleophile in catalysis.

It belongs to the succinylarginine dihydrolase family. In terms of assembly, homodimer.

It catalyses the reaction N(2)-succinyl-L-arginine + 2 H2O + 2 H(+) = N(2)-succinyl-L-ornithine + 2 NH4(+) + CO2. Its pathway is amino-acid degradation; L-arginine degradation via AST pathway; L-glutamate and succinate from L-arginine: step 2/5. Catalyzes the hydrolysis of N(2)-succinylarginine into N(2)-succinylornithine, ammonia and CO(2). In Shewanella baltica (strain OS223), this protein is N-succinylarginine dihydrolase.